The sequence spans 287 residues: Genetic interactor of prohibitin 7, mitochondrial (287 aa).

Residues 1-24 constitute a mitochondrion transit peptide; sequence MVLSNVKIFRLKSHRAFRIGPMIK. The helical transmembrane segment at 250 to 266 threads the bilayer; it reads SKAIISFVVFVSIYVWL.

It belongs to the GEP7 family.

Its subcellular location is the mitochondrion membrane. Its function is as follows. Involved in respiratory growth and required for cell survival in the absence of prohibitins or GEM1. The sequence is that of Genetic interactor of prohibitin 7, mitochondrial (GEP7) from Saccharomyces cerevisiae (strain ATCC 204508 / S288c) (Baker's yeast).